Here is a 416-residue protein sequence, read N- to C-terminus: Cyclic dinucleotide synthase CdnG (416 aa).

S72 contributes to the GTP binding site. Catalysis depends on residues D89, D91, and D140. Position 91 (D91) interacts with GTP. D91 contacts Mg(2+). The tract at residues 145–167 (RRRAPKEKEGEIPHAKKGTRSDP) is disordered. The segment covering 150 to 167 (KEKEGEIPHAKKGTRSDP) has biased composition (basic and acidic residues). The GTP site is built by K236, S253, E305, R306, and D309.

This sequence belongs to the CD-NTase family. G10 subfamily. Requires Mg(2+) as cofactor.

The enzyme catalyses UTP + GTP = 3',3'-cGMP-UMP + 2 diphosphate. The catalysed reaction is GTP + ATP = 3',3'-cGAMP + 2 diphosphate. It carries out the reaction 2 ATP = 3',3'-c-di-AMP + 2 diphosphate. Cyclic nucleotide synthase (second messenger synthase) of a CBASS antivirus system. CBASS (cyclic oligonucleotide-based antiphage signaling system) provides immunity against bacteriophage. The CD-NTase protein synthesizes cyclic nucleotides in response to infection; these serve as specific second messenger signals. The signals activate a diverse range of effectors, leading to bacterial cell death and thus abortive phage infection. A type II-short CBASS system. In terms of biological role, cyclic dinucleotide synthase that catalyzes the synthesis of predominantly 3'3'-cGMP-UMP, followed by 3'3'-cGAMP and c-di-AMP in a reaction mixture of ATP, CTP, GTP and UTP. The cyclic nucleotide products are second messengers that activate the CBASS Cap5 effector nuclease, leading to DNA degradation and probably cell death. Cyclic nucleotides do not activate the effector equally; reactions with ATP/GTP, ATP/UTP and ATP alone activate Cap5, whereas reaction with GTP/UTP (the major in vitro product) do not. This chain is Cyclic dinucleotide synthase CdnG, found in Bradyrhizobium diazoefficiens (strain JCM 10833 / BCRC 13528 / IAM 13628 / NBRC 14792 / USDA 110).